Consider the following 62-residue polypeptide: Dual specificity mitogen-activated protein kinase kinase 3 (62 aa).

Positions 1-62 (GKIAVSIVKA…VAKTMDAGCK (62 aa)) constitute a Protein kinase domain.

It belongs to the protein kinase superfamily. STE Ser/Thr protein kinase family. MAP kinase kinase subfamily. Activated by phosphorylation on Ser/Thr catalyzed by MAP kinase kinase kinases.

The enzyme catalyses L-seryl-[protein] + ATP = O-phospho-L-seryl-[protein] + ADP + H(+). It catalyses the reaction L-threonyl-[protein] + ATP = O-phospho-L-threonyl-[protein] + ADP + H(+). The catalysed reaction is L-tyrosyl-[protein] + ATP = O-phospho-L-tyrosyl-[protein] + ADP + H(+). Its function is as follows. Catalyzes the concomitant phosphorylation of a threonine and a tyrosine residue in a Thr-Glu-Tyr sequence located in MAP kinases. The sequence is that of Dual specificity mitogen-activated protein kinase kinase 3 (map2k3) from Xenopus laevis (African clawed frog).